Here is a 394-residue protein sequence, read N- to C-terminus: MSKEKFERTKPHVNVGTIGHVDHGKTTLTAAITTVLAKTYGGAARAFDQIDNAPEEKARGITINTSHVEYDTPTRHYAHVDCPGHADYVKNMITGAAQMDGAILVVAATDGPMPQTREHILLGRQVGVPYIIVFLNKCDMVDDEELLELVEMEVRELLSQYDFPGDDTPIVRGSALKALEGDAEWEAKILELAGFLDSYIPEPERAIDKPFLLPIEDVFSISGRGTVVTGRVERGIIKVGEEVEIVGIKETQKSTCTGVEMFRKLLDEGRAGENVGVLLRGIKREEIERGQVLAKPGTIKPHTKFESEVYILSKDEGGRHTPFFKGYRPQFYFRTTDVTGTIELPEGVEMVMPGDNIKMVVTLIHPIAMDDGLRFAIREGGRTVGAGVVAKVLS.

The tr-type G domain maps to 10–204; sequence KPHVNVGTIG…FLDSYIPEPE (195 aa). Residues 19–26 form a G1 region; that stretch reads GHVDHGKT. 19-26 is a GTP binding site; sequence GHVDHGKT. Thr26 serves as a coordination point for Mg(2+). The G2 stretch occupies residues 60-64; it reads GITIN. A G3 region spans residues 81–84; sequence DCPG. GTP is bound by residues 81–85 and 136–139; these read DCPGH and NKCD. Positions 136 to 139 are G4; the sequence is NKCD. The tract at residues 174 to 176 is G5; it reads SAL.

This sequence belongs to the TRAFAC class translation factor GTPase superfamily. Classic translation factor GTPase family. EF-Tu/EF-1A subfamily. As to quaternary structure, monomer.

Its subcellular location is the cytoplasm. The enzyme catalyses GTP + H2O = GDP + phosphate + H(+). GTP hydrolase that promotes the GTP-dependent binding of aminoacyl-tRNA to the A-site of ribosomes during protein biosynthesis. This chain is Elongation factor Tu 2, found in Shigella flexneri serotype 5b (strain 8401).